The chain runs to 115 residues: Photosystem II reaction center Psb28 protein (115 aa).

It belongs to the Psb28 family. In terms of assembly, part of the photosystem II complex.

It is found in the plastid. It localises to the chloroplast thylakoid membrane. This Cyanidium caldarium (Red alga) protein is Photosystem II reaction center Psb28 protein.